The primary structure comprises 320 residues: Polyisoprenyl-teichoic acid--peptidoglycan teichoic acid transferase TagU (320 aa).

Over 1 to 15 the chain is Cytoplasmic; it reads MVSRTERKQHKKRRK. A helical; Signal-anchor for type II membrane protein membrane pass occupies residues 16-36; the sequence is WPFWLGGILLVLLLLISGGIF. The Extracellular portion of the chain corresponds to 37–320; that stretch reads LIYNQVGAVV…SEITGHMQEQ (284 aa).

The protein belongs to the LytR/CpsA/Psr (LCP) family.

Its subcellular location is the cell membrane. It functions in the pathway cell wall biogenesis. Functionally, may catalyze the final step in cell wall teichoic acid biosynthesis, the transfer of the anionic cell wall polymers (APs) from their lipid-linked precursor to the cell wall peptidoglycan (PG). The sequence is that of Polyisoprenyl-teichoic acid--peptidoglycan teichoic acid transferase TagU from Oceanobacillus iheyensis (strain DSM 14371 / CIP 107618 / JCM 11309 / KCTC 3954 / HTE831).